We begin with the raw amino-acid sequence, 213 residues long: High frequency lysogenization protein HflD homolog (213 aa).

The stretch at 79–126 (QGLNAELTRYTLSLMVLERKLSSAKGALDTLGNRINGLQRQLEHFDLQ) forms a coiled coil.

This sequence belongs to the HflD family.

The protein resides in the cytoplasm. The protein localises to the cell inner membrane. The chain is High frequency lysogenization protein HflD homolog from Shigella dysenteriae serotype 1 (strain Sd197).